The chain runs to 139 residues: 6,7-dimethyl-8-ribityllumazine synthase (139 aa).

Residues Phe13, 45–47, and 69–71 contribute to the 5-amino-6-(D-ribitylamino)uracil site; these read VFD and AVI. 74-75 contacts (2S)-2-hydroxy-3-oxobutyl phosphate; sequence AT. His77 acts as the Proton donor in catalysis. Leu102 is a binding site for 5-amino-6-(D-ribitylamino)uracil. Arg117 provides a ligand contact to (2S)-2-hydroxy-3-oxobutyl phosphate.

Belongs to the DMRL synthase family.

It carries out the reaction (2S)-2-hydroxy-3-oxobutyl phosphate + 5-amino-6-(D-ribitylamino)uracil = 6,7-dimethyl-8-(1-D-ribityl)lumazine + phosphate + 2 H2O + H(+). The protein operates within cofactor biosynthesis; riboflavin biosynthesis; riboflavin from 2-hydroxy-3-oxobutyl phosphate and 5-amino-6-(D-ribitylamino)uracil: step 1/2. Catalyzes the formation of 6,7-dimethyl-8-ribityllumazine by condensation of 5-amino-6-(D-ribitylamino)uracil with 3,4-dihydroxy-2-butanone 4-phosphate. This is the penultimate step in the biosynthesis of riboflavin. The protein is 6,7-dimethyl-8-ribityllumazine synthase of Methanothermobacter thermautotrophicus (strain ATCC 29096 / DSM 1053 / JCM 10044 / NBRC 100330 / Delta H) (Methanobacterium thermoautotrophicum).